The primary structure comprises 572 residues: MKVITCEIAWHNKEPVYSLDFQHGATWKIHRLASAGVDTAVRIWKLERGPDGKAIVEFLSNLARHTKAVNVVRFSPTGEILASGGDDAVILLWKMNDSKEPEQIAFQDEEEAQLNKENWTVVKTLRGHLEDVYDICWATDGNLMTSASVDNTVIIWDVSKGQKISIFNEHKSYVQGVTWDPLGQYIATLSCDRVLRIYNTQKKRVAFNISKMLSGQGPEGEARSFRMFHDDSMKSFFRRLSFTPDGSLLLTPAGCMESGENVTNTTYVFSRKHLKRPIAHLPCPGKATLAVRCCPVYFELRPVAETEKASEEPSPELVNLPYRMVFAVASEDSVLLYDTQQSFPFGYVSNIHYHTLSDISWSSDGAFLAISSTDGYCTFVTFEKGELGIPLKEKPVLSIRTPDTAKKAKNQTHQGSSPGSRSVEGTPSNRTQDPSSPCTTPSPTTQSPAPSAIKDSPSAIPAGKSPLPQPSEEKTLQPAGQNMKAPQPRRVTLNTLQTWGKTAPRRINLTPLKTDTVPNPQPNSGTAPSTEEVQPEAPGEPPEEPPELKRPRLEEREGDAQNLAPDDSSKTV.

7 WD repeats span residues 11–54, 64–103, 127–166, 169–208, 228–279, 301–347, and 351–392; these read HNKE…DGKA, RHTK…EPEQ, GHLE…KISI, EHKS…VAFN, FHDD…RPIA, RPVA…PFGY, and IHYH…IPLK. Thr401 carries the post-translational modification Phosphothreonine. Positions 403–572 are disordered; the sequence is DTAKKAKNQT…LAPDDSSKTV (170 aa). A compositionally biased stretch (polar residues) spans 411-430; it reads QTHQGSSPGSRSVEGTPSNR. Phosphoserine is present on Ser416. Thr426 is subject to Phosphothreonine. Low complexity predominate over residues 431 to 452; it reads TQDPSSPCTTPSPTTQSPAPSA. A Phosphoserine modification is found at Ser436. Phosphothreonine is present on Thr440. Phosphoserine is present on residues Ser456 and Ser465. Lys501 carries the N6-acetyllysine modification. Phosphothreonine occurs at positions 502 and 510. Polar residues predominate over residues 511-529; the sequence is PLKTDTVPNPQPNSGTAPS. Positions 546–559 are enriched in basic and acidic residues; it reads PELKRPRLEEREGD.

It belongs to the WD repeat HIR1 family. As to quaternary structure, subunit of the CAF-1 complex that contains RBBP4, CHAF1B and CHAF1A. CHAF1A binds directly to CHAF1B. Interacts with histones H3.1, H3.2 and H3.1t.

The protein resides in the nucleus. It localises to the cytoplasm. Functionally, acts as a component of the histone chaperone complex chromatin assembly factor 1 (CAF-1), which assembles histone octamers onto DNA during replication and repair. CAF-1 performs the first step of the nucleosome assembly process, bringing newly synthesized histones H3 and H4 to replicating DNA; histones H2A/H2B can bind to this chromatin precursor subsequent to DNA replication to complete the histone octamer. This Mus musculus (Mouse) protein is Chromatin assembly factor 1 subunit B.